The primary structure comprises 325 residues: ADP-L-glycero-D-manno-heptose-6-epimerase (325 aa).

Residues 10-11 (FI), 31-32 (DD), Lys-38, and 75-79 (EGACS) contribute to the NADP(+) site. The active-site Proton acceptor is the Tyr-139. An NADP(+)-binding site is contributed by Lys-143. Asn-167 lines the substrate pocket. 2 residues coordinate NADP(+): Val-168 and Lys-176. Lys-176 acts as the Proton acceptor in catalysis. Substrate-binding positions include Ser-178, His-185, 199-202 (FEGS), Arg-212, and Tyr-285.

The protein belongs to the NAD(P)-dependent epimerase/dehydratase family. HldD subfamily. Homopentamer. NADP(+) is required as a cofactor.

The catalysed reaction is ADP-D-glycero-beta-D-manno-heptose = ADP-L-glycero-beta-D-manno-heptose. It functions in the pathway nucleotide-sugar biosynthesis; ADP-L-glycero-beta-D-manno-heptose biosynthesis; ADP-L-glycero-beta-D-manno-heptose from D-glycero-beta-D-manno-heptose 7-phosphate: step 4/4. Catalyzes the interconversion between ADP-D-glycero-beta-D-manno-heptose and ADP-L-glycero-beta-D-manno-heptose via an epimerization at carbon 6 of the heptose. The sequence is that of ADP-L-glycero-D-manno-heptose-6-epimerase from Azoarcus sp. (strain BH72).